The sequence spans 296 residues: Fructose-bisphosphate aldolase class 1 (296 aa).

Catalysis depends on Glu175, which acts as the Proton acceptor. The Schiff-base intermediate with dihydroxyacetone-P role is filled by Lys212.

Belongs to the class I fructose-bisphosphate aldolase family.

It carries out the reaction beta-D-fructose 1,6-bisphosphate = D-glyceraldehyde 3-phosphate + dihydroxyacetone phosphate. It participates in carbohydrate degradation; glycolysis; D-glyceraldehyde 3-phosphate and glycerone phosphate from D-glucose: step 4/4. In Staphylococcus epidermidis (strain ATCC 12228 / FDA PCI 1200), this protein is Fructose-bisphosphate aldolase class 1 (fda).